We begin with the raw amino-acid sequence, 242 residues long: Small ribosomal subunit protein uS3 (242 aa).

One can recognise a KH type-2 domain in the interval 39 to 110; the sequence is IRRFIHKKYG…QVRINVVEVE (72 aa). Positions 217-242 are disordered; the sequence is TMPVGASPRRRGNRRPQQFEDRSNEG. Over residues 233–242 the composition is skewed to basic and acidic residues; sequence QQFEDRSNEG.

Belongs to the universal ribosomal protein uS3 family. In terms of assembly, part of the 30S ribosomal subunit. Forms a tight complex with proteins S10 and S14.

Binds the lower part of the 30S subunit head. Binds mRNA in the 70S ribosome, positioning it for translation. In Prochlorococcus marinus (strain MIT 9313), this protein is Small ribosomal subunit protein uS3.